Here is a 141-residue protein sequence, read N- to C-terminus: Zinc finger protein 593 homolog (141 aa).

The disordered stretch occupies residues 1-32 (MGRYSGHGGTHTKKKQYKRARSTKNRAKDIDQ). Over residues 10–25 (THTKKKQYKRARSTKN) the composition is skewed to basic residues. The segment at 60–84 (NYCIHCSKHFVTNEDLQSHIKGKPH) adopts a C2H2-type zinc-finger fold.

It belongs to the ZNF593/BUD20 C2H2-type zinc-finger protein family. In terms of assembly, associates with pre-60S ribosomal particles; released from the pre-60S particle very early in the cytoplasm.

It is found in the nucleus. It localises to the cytoplasm. In terms of biological role, involved in pre-60S ribosomal particles maturation by promoting the nuclear export of the 60S ribosome. This Dictyostelium discoideum (Social amoeba) protein is Zinc finger protein 593 homolog.